The primary structure comprises 217 residues: MAKAIQSSMWREFGLMCTVGIGDNMLLSKLALDLESKKTKSGIARWRYEDVPNRLWKVRPLSKMWGIGGRMERNLNRMGISTVGQLAKFPLELLEKKFGIMGNQLYYHAHGIDLSEIGAPLMQGQISFGKSQILFRDYTKREEIKAVLLEICEEVARRARTYNKVGRTISLGIGYSKDELGGGFHRSKTIDFPTNITMDIYKCCLMFFNKFYSGKKQ.

The region spanning 1 to 68 is the UmuC domain; the sequence is MAKAIQSSMW…RPLSKMWGIG (68 aa).

It belongs to the DNA polymerase type-Y family.

This Bacillus subtilis (strain 168) protein is DNA repair protein homolog YobH (yobH).